Reading from the N-terminus, the 304-residue chain is Protease HtpX homolog (304 aa).

2 helical membrane-spanning segments follow: residues 14–34 (VFIV…IGII) and 39–59 (YLNG…IMVM). Histidine 144 provides a ligand contact to Zn(2+). Glutamate 145 is a catalytic residue. Histidine 148 contacts Zn(2+). A run of 2 helical transmembrane segments spans residues 161 to 181 (IALV…IFWG) and 202 to 222 (LIIY…ATAI). Glutamate 231 contacts Zn(2+). A disordered region spans residues 276-295 (SPLKSKKDKPGIFDSHPPIS).

It belongs to the peptidase M48B family. Requires Zn(2+) as cofactor.

The protein resides in the cell membrane. This chain is Protease HtpX homolog, found in Listeria welshimeri serovar 6b (strain ATCC 35897 / DSM 20650 / CCUG 15529 / CIP 8149 / NCTC 11857 / SLCC 5334 / V8).